The chain runs to 166 residues: CDP-archaeol synthase (166 aa).

Helical transmembrane passes span 42-62 (FFGG…AATA), 73-93 (FLSV…KSFL), 104-124 (SWFL…ILIF), and 128-148 (WLFG…TPLL).

This sequence belongs to the CDP-archaeol synthase family. It depends on Mg(2+) as a cofactor.

It is found in the cell membrane. It carries out the reaction 2,3-bis-O-(geranylgeranyl)-sn-glycerol 1-phosphate + CTP + H(+) = CDP-2,3-bis-O-(geranylgeranyl)-sn-glycerol + diphosphate. It participates in membrane lipid metabolism; glycerophospholipid metabolism. Its function is as follows. Catalyzes the formation of CDP-2,3-bis-(O-geranylgeranyl)-sn-glycerol (CDP-archaeol) from 2,3-bis-(O-geranylgeranyl)-sn-glycerol 1-phosphate (DGGGP) and CTP. This reaction is the third ether-bond-formation step in the biosynthesis of archaeal membrane lipids. This is CDP-archaeol synthase from Methanoculleus marisnigri (strain ATCC 35101 / DSM 1498 / JR1).